Consider the following 342-residue polypeptide: Pyridoxal 4-dehydrogenase (342 aa).

Aspartate 56 is a catalytic residue. Catalysis depends on tyrosine 61, which acts as the Proton donor. Lysine 86 is a catalytic residue. 245 to 255 serves as a coordination point for NADP(+); the sequence is GVFNSGILAAP.

This sequence belongs to the aldo/keto reductase family. Homodimer.

The enzyme catalyses pyridoxal + NAD(+) = 4-pyridoxolactone + NADH + H(+). It functions in the pathway cofactor degradation; B6 vitamer degradation; 4-pyridoxate from pyridoxal: step 1/2. This chain is Pyridoxal 4-dehydrogenase (pld1), found in Microbacterium luteolum (Aureobacterium luteolum).